The following is a 139-amino-acid chain: Putative nickel-responsive regulator (139 aa).

Ni(2+) contacts are provided by His-77, His-88, His-90, and Cys-96.

Belongs to the transcriptional regulatory CopG/NikR family. The cofactor is Ni(2+).

In terms of biological role, transcriptional regulator. The polypeptide is Putative nickel-responsive regulator (Haloarcula marismortui (strain ATCC 43049 / DSM 3752 / JCM 8966 / VKM B-1809) (Halobacterium marismortui)).